The primary structure comprises 639 residues: Chaperone protein DnaK (639 aa).

Thr198 is modified (phosphothreonine; by autocatalysis). Positions 602–639 are disordered; it reads QAKSQAQGGDNADAGKQANATADDVVDAEFEEVKDDKK. The span at 625–639 shows a compositional bias: acidic residues; that stretch reads DVVDAEFEEVKDDKK.

It belongs to the heat shock protein 70 family.

Acts as a chaperone. In Shewanella baltica (strain OS195), this protein is Chaperone protein DnaK.